A 118-amino-acid polypeptide reads, in one-letter code: Small ribosomal subunit protein uS13 (118 aa).

The segment at 91–118 (HRRGLPVRGQRTKTNARTRKGPRKPIKK) is disordered.

This sequence belongs to the universal ribosomal protein uS13 family. In terms of assembly, part of the 30S ribosomal subunit. Forms a loose heterodimer with protein S19. Forms two bridges to the 50S subunit in the 70S ribosome.

Functionally, located at the top of the head of the 30S subunit, it contacts several helices of the 16S rRNA. In the 70S ribosome it contacts the 23S rRNA (bridge B1a) and protein L5 of the 50S subunit (bridge B1b), connecting the 2 subunits; these bridges are implicated in subunit movement. Contacts the tRNAs in the A and P-sites. The polypeptide is Small ribosomal subunit protein uS13 (Hamiltonella defensa subsp. Acyrthosiphon pisum (strain 5AT)).